A 210-amino-acid chain; its full sequence is Outer-membrane lipoprotein LolB (210 aa).

A signal peptide spans 1–29 (MSLISNNEERSLRVRYCIAIALSALLISG). Cys30 carries the N-palmitoyl cysteine lipid modification. Cys30 is lipidated: S-diacylglycerol cysteine.

This sequence belongs to the LolB family. Monomer.

It localises to the cell outer membrane. Its function is as follows. Plays a critical role in the incorporation of lipoproteins in the outer membrane after they are released by the LolA protein. The sequence is that of Outer-membrane lipoprotein LolB from Coxiella burnetii (strain RSA 493 / Nine Mile phase I).